A 100-amino-acid polypeptide reads, in one-letter code: Urease subunit gamma (100 aa).

This sequence belongs to the urease gamma subunit family. Probable heterotrimer of UreA (gamma), UreB (beta) and UreC (alpha) subunits. Three heterotrimers associate to form the active enzyme. The trimeric urease interacts with an accessory complex composed of UreD, UreF and UreG, which is required for the assembly of the nickel containing metallocenter of UreC. The UreE protein may also play a direct role in nickel transfer to the urease apoprotein.

The protein resides in the cytoplasm. The enzyme catalyses urea + 2 H2O + H(+) = hydrogencarbonate + 2 NH4(+). Its pathway is nitrogen metabolism; urea degradation; CO(2) and NH(3) from urea (urease route): step 1/1. The polypeptide is Urease subunit gamma (Proteus mirabilis (strain HI4320)).